A 783-amino-acid polypeptide reads, in one-letter code: E3 UFM1-protein ligase 1 homolog (783 aa).

Residues 406–476 (TLGTTHDADE…DAVQQSANSS (71 aa)) form a disordered region. Positions 446-457 (KSTKKHQRGRAA) are enriched in basic residues.

The protein belongs to the UFL1 family.

E3 UFM1-protein ligase that mediates ufmylation of target proteins. This chain is E3 UFM1-protein ligase 1 homolog, found in Drosophila grimshawi (Hawaiian fruit fly).